We begin with the raw amino-acid sequence, 345 residues long: Protein SHI RELATED SEQUENCE 7 (345 aa).

Positions 7–28 (LGGRDHNKQDHHQEKDHNEDKS) are disordered. Residues 9–28 (GRDHNKQDHHQEKDHNEDKS) show a composition bias toward basic and acidic residues. The Zn(2+) site is built by Cys-119, Cys-122, Cys-130, Cys-135, Cys-139, and Cys-146. Positions 119 to 146 (CQDCGNQAKKDCPHMRCRTCCKSRGFDC) form a DNA-binding region, zn(2)-C6 fungal-type; degenerate. The segment at 168-200 (AVLPAKRIRDANSRGGGDDDDDDKEDEKNDSCG) is disordered. Positions 256-259 (IGGH) match the Required for homo- and heterodimerization motif.

The protein belongs to the SHI protein family. Mainly expressed in the filaments of flowers, the shoot apex regions and pollen. Also present in leaves.

Its subcellular location is the nucleus. Its function is as follows. Transcription activator that binds DNA on 5'-ACTCTAC-3' and promotes auxin homeostasis-regulating gene expression (e.g. YUC genes), as well as genes affecting stamen development, cell expansion and timing of flowering. Synergistically with other SHI-related proteins, regulates gynoecium, stamen and leaf development in a dose-dependent manner, controlling apical-basal patterning. Promotes style and stigma formation, and influences vascular development during gynoecium development. May also have a role in the formation and/or maintenance of the shoot apical meristem (SAM). Regulates anther dehiscence and floral development. This Arabidopsis thaliana (Mouse-ear cress) protein is Protein SHI RELATED SEQUENCE 7 (SRS7).